Reading from the N-terminus, the 165-residue chain is Cyclic pyranopterin monophosphate synthase (165 aa).

Residues 83–85 and 120–121 each bind substrate; these read FCH and ME. D135 is a catalytic residue.

The protein belongs to the MoaC family. Homohexamer; trimer of dimers.

The enzyme catalyses (8S)-3',8-cyclo-7,8-dihydroguanosine 5'-triphosphate = cyclic pyranopterin phosphate + diphosphate. It functions in the pathway cofactor biosynthesis; molybdopterin biosynthesis. Catalyzes the conversion of (8S)-3',8-cyclo-7,8-dihydroguanosine 5'-triphosphate to cyclic pyranopterin monophosphate (cPMP). In Xanthomonas axonopodis pv. citri (strain 306), this protein is Cyclic pyranopterin monophosphate synthase.